Reading from the N-terminus, the 259-residue chain is Phosphatidylserine decarboxylase proenzyme (259 aa).

Ser183 serves as the catalytic Schiff-base intermediate with substrate; via pyruvic acid. Ser183 carries the post-translational modification Pyruvic acid (Ser); by autocatalysis.

This sequence belongs to the phosphatidylserine decarboxylase family. PSD-A subfamily. As to quaternary structure, heterodimer of a large membrane-associated beta subunit and a small pyruvoyl-containing alpha subunit. It depends on pyruvate as a cofactor. Post-translationally, is synthesized initially as an inactive proenzyme. Formation of the active enzyme involves a self-maturation process in which the active site pyruvoyl group is generated from an internal serine residue via an autocatalytic post-translational modification. Two non-identical subunits are generated from the proenzyme in this reaction, and the pyruvate is formed at the N-terminus of the alpha chain, which is derived from the carboxyl end of the proenzyme. The post-translation cleavage follows an unusual pathway, termed non-hydrolytic serinolysis, in which the side chain hydroxyl group of the serine supplies its oxygen atom to form the C-terminus of the beta chain, while the remainder of the serine residue undergoes an oxidative deamination to produce ammonia and the pyruvoyl prosthetic group on the alpha chain.

It localises to the cell membrane. It carries out the reaction a 1,2-diacyl-sn-glycero-3-phospho-L-serine + H(+) = a 1,2-diacyl-sn-glycero-3-phosphoethanolamine + CO2. It participates in phospholipid metabolism; phosphatidylethanolamine biosynthesis; phosphatidylethanolamine from CDP-diacylglycerol: step 2/2. Its function is as follows. Catalyzes the formation of phosphatidylethanolamine (PtdEtn) from phosphatidylserine (PtdSer). The protein is Phosphatidylserine decarboxylase proenzyme of Neisseria gonorrhoeae (strain ATCC 700825 / FA 1090).